Consider the following 138-residue polypeptide: Large ribosomal subunit protein uL16c (138 aa).

Residues 1-21 (MLSPQKTKFRKQHRGRMKGVS) are disordered. Over residues 7 to 21 (TKFRKQHRGRMKGVS) the composition is skewed to basic residues.

It belongs to the universal ribosomal protein uL16 family. Part of the 50S ribosomal subunit.

Its subcellular location is the plastid. The protein localises to the chloroplast. In Cycas taitungensis (Prince sago), this protein is Large ribosomal subunit protein uL16c.